A 671-amino-acid polypeptide reads, in one-letter code: Copper amine oxidase 1 (671 aa).

The interval 3–106 is N2; the sequence is PHPLAILSEE…QHRVVGKEHH (104 aa). Residues 107–211 form an N3 region; it reads ASLTLSEFDT…DRPATGGKGE (105 aa). Position 319 to 330 (319 to 330) interacts with substrate; that stretch reads AFDFGDGGGGNM. Asp321 serves as the catalytic Proton acceptor. A disulfide bridge links Cys340 with Cys366. A substrate-binding site is contributed by 402 to 407; that stretch reads LANYEY. The active-site Schiff-base intermediate with substrate; via topaquinone is Tyr405. Tyr405 is subject to 2',4',5'-topaquinone. His455 and His457 together coordinate Cu cation. Asp464 contributes to the Mn(2+) binding site. The N-linked (GlcNAc...) asparagine glycan is linked to Asn471. Asp606 provides a ligand contact to Mn(2+). Residue His617 coordinates Cu cation.

The protein belongs to the copper/topaquinone oxidase family. In terms of assembly, homodimer. Cu cation is required as a cofactor. Requires Zn(2+) as cofactor. It depends on L-topaquinone as a cofactor. Mn(2+) serves as cofactor. Post-translationally, topaquinone (TPQ) is generated by copper-dependent autoxidation of a specific tyrosyl residue.

The catalysed reaction is histamine + O2 + H2O = imidazole-4-acetaldehyde + H2O2 + NH4(+). In Aspergillus niger, this protein is Copper amine oxidase 1 (AO-I).